The primary structure comprises 255 residues: 5-oxoprolinase subunit A (255 aa).

This sequence belongs to the LamB/PxpA family. In terms of assembly, forms a complex composed of PxpA, PxpB and PxpC.

The catalysed reaction is 5-oxo-L-proline + ATP + 2 H2O = L-glutamate + ADP + phosphate + H(+). Functionally, catalyzes the cleavage of 5-oxoproline to form L-glutamate coupled to the hydrolysis of ATP to ADP and inorganic phosphate. The chain is 5-oxoprolinase subunit A from Campylobacter jejuni subsp. doylei (strain ATCC BAA-1458 / RM4099 / 269.97).